Consider the following 295-residue polypeptide: Protoheme IX farnesyltransferase (295 aa).

The next 9 helical transmembrane spans lie at 9–29 (ITKP…FFLA), 36–56 (FGVF…GCVF), 80–100 (LVSL…GVAL), 108–128 (LAAL…SLYL), 135–155 (GTLV…CAVS), 163–183 (LTLL…IAIF), 209–229 (ILLY…GGYA), 230–250 (GLNY…MAWK), and 265–285 (FVFS…DFQV).

Belongs to the UbiA prenyltransferase family. Protoheme IX farnesyltransferase subfamily.

The protein resides in the cell inner membrane. The catalysed reaction is heme b + (2E,6E)-farnesyl diphosphate + H2O = Fe(II)-heme o + diphosphate. It participates in porphyrin-containing compound metabolism; heme O biosynthesis; heme O from protoheme: step 1/1. In terms of biological role, converts heme B (protoheme IX) to heme O by substitution of the vinyl group on carbon 2 of heme B porphyrin ring with a hydroxyethyl farnesyl side group. This Pseudomonas syringae pv. tomato (strain ATCC BAA-871 / DC3000) protein is Protoheme IX farnesyltransferase.